An 84-amino-acid chain; its full sequence is ATP synthase subunit c (84 aa).

2 helical membrane-spanning segments follow: residues 10 to 30 (IAVAIMIGLAALGTAIGFAIL) and 53 to 73 (FIVAGLLDAISMIAVGVALFF).

This sequence belongs to the ATPase C chain family. F-type ATPases have 2 components, F(1) - the catalytic core - and F(0) - the membrane proton channel. F(1) has five subunits: alpha(3), beta(3), gamma(1), delta(1), epsilon(1). F(0) has three main subunits: a(1), b(2) and c(10-14). The alpha and beta chains form an alternating ring which encloses part of the gamma chain. F(1) is attached to F(0) by a central stalk formed by the gamma and epsilon chains, while a peripheral stalk is formed by the delta and b chains.

It localises to the cell inner membrane. Functionally, f(1)F(0) ATP synthase produces ATP from ADP in the presence of a proton or sodium gradient. F-type ATPases consist of two structural domains, F(1) containing the extramembraneous catalytic core and F(0) containing the membrane proton channel, linked together by a central stalk and a peripheral stalk. During catalysis, ATP synthesis in the catalytic domain of F(1) is coupled via a rotary mechanism of the central stalk subunits to proton translocation. In terms of biological role, key component of the F(0) channel; it plays a direct role in translocation across the membrane. A homomeric c-ring of between 10-14 subunits forms the central stalk rotor element with the F(1) delta and epsilon subunits. The chain is ATP synthase subunit c from Shewanella putrefaciens (strain CN-32 / ATCC BAA-453).